The primary structure comprises 356 residues: Chitin elicitor-binding protein (356 aa).

The N-terminal stretch at 1–28 (MASLTAALATPAAAALLLLVLLAAPASA) is a signal peptide. A glycan (N-linked (GlcNAc...) asparagine) is linked at Asn30. Intrachain disulfides connect Cys33-Cys100, Cys41-Cys164, Cys98-Cys162, and Cys100-Cys164. 50 to 51 (PN) serves as a coordination point for chitin. N-linked (GlcNAc...) asparagine glycans are attached at residues Asn63 and Asn89. LysM domains are found at residues 111-158 (PIYV…TLWI) and 175-219 (LAYS…ILDV). Chitin-binding positions include 117 to 123 (PQDGLDA), Asn142, 145 to 152 (PDPNKINV), Thr155, and Gly182. A glycan (N-linked (GlcNAc...) asparagine) is linked at Asn151. Asn184 is a glycosylation site (N-linked (GlcNAc...) asparagine). Chitin is bound by residues Ser186 and 211 to 213 (LQM). Disulfide bonds link Cys224–Cys257 and Cys252–Cys274. 5 N-linked (GlcNAc...) asparagine glycosylation sites follow: Asn265, Asn281, Asn290, Asn306, and Asn319. The helical transmembrane segment at 336 to 356 (RSMWSMSVISFHMVLIIICFL) threads the bilayer.

As to quaternary structure, forms homooligomer. Interacts with CERK1. Binds to chitin oligosaccharide elicitor. Interacts with LYP4 and LYP6. In terms of processing, N-glycosylated. In terms of tissue distribution, expressed in seedlings, roots, shoots, stems and flowers.

The protein localises to the cell membrane. Its function is as follows. Chitin elicitor-binding protein involved in the perception and transduction of chitin oligosaccharide elicitor signal for defense responses. The chain is Chitin elicitor-binding protein from Oryza sativa subsp. japonica (Rice).